Consider the following 207-residue polypeptide: MAKTYDYLFKLLLIGDSGVGKTCVLFRFSEDAFNSTFISTIGIDFKIRTIELDGKRIKLQIWDTAGQERFRTITTAYYRGAMGIMLVYDITNEKSFDNIRNWIRNIEEHASADVEKMILGNKRDVNDKRQVSKERGEKLALDYGIKFMETSAKANINVENAFFTLARDIKAKMDKKLEGNSPQGSNQGVKITPDQQKRSSFFRCVLL.

GTP is bound by residues S17, G18, V19, G20, K21, T22, C23, S35, S39, and T40. Residue T22 participates in Mg(2+) binding. Short sequence motifs (switch) lie at residues 31–45 (DAFN…GIDF) and 63–80 (DTAG…YYRG). T40 and D63 together coordinate Mg(2+). G66 serves as a coordination point for GTP. T72 carries the phosphothreonine modification. Residues N121, K122, D124, A152, and K153 each contribute to the GTP site. 2 positions are modified to phosphoserine: S181 and S185. C204 carries the post-translational modification Cysteine methyl ester. C204 carries S-geranylgeranyl cysteine lipidation. A propeptide spans 205–207 (VLL) (removed in mature form).

The protein belongs to the small GTPase superfamily. Rab family. As to quaternary structure, interacts (GTP-bound form) with MICALL1; regulates RAB8A association with recycling endosomes. Interacts with MICALL2; competes with RAB13 and is involved in E-cadherin endocytic recycling. Interacts (GTP-bound form) with MICAL1, MICALCL, MICAL3, EHBP1 and EHBP1L1; at least in case of MICAL1, MICALCL, MICAL3 and EHBP1L1 two molecules of RAB8A can bind to one molecule of the effector protein; ternary complexes of RAB8A, RAB13 and either MICAL1 or EHBP1L1 are possible. Interacts with EHD1. Interacts with MAP4K2 and SYTL4. Interacts with SGSM1 and SGSM3. Interacts with RABIF, RIMS2, RPH3A and RPH3A. Interacts with OPTN. Interacts with RAB3IP, RAB3IP functions as guanine exchange factor (GEF). Interacts with MYO5B. Interacts with CIMAP3. Interacts with BIRC6/bruce. Interacts with OCRL. Interacts with AHI1. Interacts with DCDC1. Interacts with LRRK2; interaction facilitates phosphorylation of Thr-72. Interacts with RAB31P, GDI1, GDI2, CHM, CHML, RABGGTA, RABGGTB, TBC1D15 and INPP5B; these interactions are dependent on Thr-72 not being phosphorylated. Interacts with RILPL1 and RILPL2; these interactions are dependent on the phosphorylation of Thr-72 by LRRK2. Interacts with DZIP1; prevents inhibition by the GDP-dissociation inhibitor GDI2. Interacts (in GDP-bound form) with RAB3IP/Rabin8, RAB3IP functions as guanine exchange factor (GEF) towards RAB8A. Interacts (in GDP-bound form) with RPGR, RPGR functions as GEF towards RAB8A. Mg(2+) is required as a cofactor. Phosphorylation of Thr-72 in the switch II region by LRRK2 prevents the association of RAB regulatory proteins, including CHM, CHML and RAB GDP dissociation inhibitors GDI1 and GDI2. Phosphorylation by LRRK2 is required for localization to stressed lysosomes.

Its subcellular location is the cell membrane. The protein resides in the golgi apparatus. It localises to the endosome membrane. The protein localises to the recycling endosome membrane. It is found in the cell projection. Its subcellular location is the cilium. The protein resides in the cytoplasmic vesicle. It localises to the phagosome membrane. The protein localises to the cytoplasm. It is found in the cytoskeleton. Its subcellular location is the microtubule organizing center. The protein resides in the centrosome. It localises to the centriole. The protein localises to the cilium basal body. It is found in the midbody. Its subcellular location is the lysosome. It carries out the reaction GTP + H2O = GDP + phosphate + H(+). With respect to regulation, regulated by guanine nucleotide exchange factors (GEFs) such as RAB3IP/Rabin8 and RPGR which promote the exchange of bound GDP for free GTP, GTPase activating proteins (GAPs) which increase the GTP hydrolysis activity, and GDP dissociation inhibitors (GDIs) which inhibit the dissociation of the nucleotide from the GTPase. Activated in response to insulin. The small GTPases Rab are key regulators of intracellular membrane trafficking, from the formation of transport vesicles to their fusion with membranes. Rabs cycle between an inactive GDP-bound form and an active GTP-bound form that is able to recruit to membranes different sets of downstream effectors directly responsible for vesicle formation, movement, tethering and fusion. RAB8A is involved in polarized vesicular trafficking and neurotransmitter release. Together with RAB11A, RAB3IP, the exocyst complex, PARD3, PRKCI, ANXA2, CDC42 and DNMBP promotes transcytosis of PODXL to the apical membrane initiation sites (AMIS), apical surface formation and lumenogenesis. Regulates the compacted morphology of the Golgi. Together with MYO5B and RAB11A participates in epithelial cell polarization. Also involved in membrane trafficking to the cilium and ciliogenesis. Together with MICALL2, may also regulate adherens junction assembly. May play a role in insulin-induced transport to the plasma membrane of the glucose transporter GLUT4 and therefore play a role in glucose homeostasis. Involved in autophagy. Participates in the export of a subset of neosynthesized proteins through a Rab8-Rab10-Rab11-dependent endososomal export route. Targeted to and stabilized on stressed lysosomes through LRRK2 phosphorylation. Suppresses stress-induced lysosomal enlargement through EHBP1 and EHNP1L1 effector proteins. The polypeptide is Ras-related protein Rab-8A (RAB8A) (Pongo abelii (Sumatran orangutan)).